The primary structure comprises 360 residues: Photosystem II protein D1 (360 aa).

Residues 1-28 (MTTTLQRRESANLWERFCNWVTSTDNRL) lie on the Cytoplasmic side of the membrane. A helical transmembrane segment spans residues 29–46 (YVGWFGVIMIPTLLAATI). The Lumenal portion of the chain corresponds to 47-117 (CFVIAFIAAP…NGGPYQLIIF (71 aa)). H118 contributes to the chlorophyll a binding site. Residues 118 to 133 (HFLLGASCYMGRQWEL) form a helical membrane-spanning segment. 2 residues coordinate pheophytin a: Y126 and Q130. The Cytoplasmic segment spans residues 134 to 141 (SYRLGMRP). A helical transmembrane segment spans residues 142 to 156 (WICVAYSAPLASAFA). Position 147 (Y147) interacts with pheophytin a. The Lumenal segment spans residues 157-196 (VFLIYPIGQGSFSDGMPLGISGTFNFMIVFQAEHNILMHP). D170 and E189 together coordinate [CaMn4O5] cluster. Residues 197-218 (FHQLGVAGVFGGALFCAMHGSL) traverse the membrane as a helical segment. H198 is a chlorophyll a binding site. M214 serves as a coordination point for pheophytin a. Residues H215 and 264 to 265 (SF) each bind a quinone. A Fe cation-binding site is contributed by H215. Residues 219-273 (VTSSLIRETTETESANYGYKFGQEEETYNIVAAHGYFGRLIFQYASFNNSRSLHF) lie on the Cytoplasmic side of the membrane. H272 lines the Fe cation pocket. Residues 274–288 (FLAAWRVVGVWFAAL) form a helical membrane-spanning segment. Residues 289 to 360 (GISTMAFNLN…VAMIAPSING (72 aa)) are Lumenal-facing. [CaMn4O5] cluster-binding residues include H332, E333, D342, and A344. Positions 345–360 (SAESAPVAMIAPSING) are excised as a propeptide.

This sequence belongs to the reaction center PufL/M/PsbA/D family. In terms of assembly, PSII is composed of 1 copy each of membrane proteins PsbA, PsbB, PsbC, PsbD, PsbE, PsbF, PsbH, PsbI, PsbJ, PsbK, PsbL, PsbM, PsbT, PsbX, PsbY, PsbZ, Psb30/Ycf12, peripheral proteins PsbO, CyanoQ (PsbQ), PsbU, PsbV and a large number of cofactors. It forms dimeric complexes. It depends on The D1/D2 heterodimer binds P680, chlorophylls that are the primary electron donor of PSII, and subsequent electron acceptors. It shares a non-heme iron and each subunit binds pheophytin, quinone, additional chlorophylls, carotenoids and lipids. D1 provides most of the ligands for the Mn4-Ca-O5 cluster of the oxygen-evolving complex (OEC). There is also a Cl(-1) ion associated with D1 and D2, which is required for oxygen evolution. The PSII complex binds additional chlorophylls, carotenoids and specific lipids. as a cofactor. Post-translationally, C-terminally processed by CtpA; processing is essential to allow assembly of the oxygen-evolving complex and thus photosynthetic growth. In terms of processing, tyr-161 forms a radical intermediate that is referred to as redox-active TyrZ, YZ or Y-Z.

Its subcellular location is the cellular thylakoid membrane. It catalyses the reaction 2 a plastoquinone + 4 hnu + 2 H2O = 2 a plastoquinol + O2. In terms of biological role, photosystem II (PSII) is a light-driven water:plastoquinone oxidoreductase that uses light energy to abstract electrons from H(2)O, generating O(2) and a proton gradient subsequently used for ATP formation. It consists of a core antenna complex that captures photons, and an electron transfer chain that converts photonic excitation into a charge separation. The D1/D2 (PsbA/PsbD) reaction center heterodimer binds P680, the primary electron donor of PSII as well as several subsequent electron acceptors. The polypeptide is Photosystem II protein D1 (Thermostichus vulcanus (Synechococcus vulcanus)).